The chain runs to 359 residues: Biotin synthase (359 aa).

The Radical SAM core domain occupies 47–276 (HHGRRVRIHV…EADLRMAGGR (230 aa)). [4Fe-4S] cluster is bound by residues Cys65, Cys69, and Cys72. Residues Cys109, Cys141, Cys201, and Arg271 each coordinate [2Fe-2S] cluster. The disordered stretch occupies residues 320-359 (EPVIVEDGPERQTPATADDTPSGDPEAADRRRQPSAGPAG).

Belongs to the radical SAM superfamily. Biotin synthase family. In terms of assembly, homodimer. The cofactor is [4Fe-4S] cluster. [2Fe-2S] cluster serves as cofactor.

It catalyses the reaction (4R,5S)-dethiobiotin + (sulfur carrier)-SH + 2 reduced [2Fe-2S]-[ferredoxin] + 2 S-adenosyl-L-methionine = (sulfur carrier)-H + biotin + 2 5'-deoxyadenosine + 2 L-methionine + 2 oxidized [2Fe-2S]-[ferredoxin]. The protein operates within cofactor biosynthesis; biotin biosynthesis; biotin from 7,8-diaminononanoate: step 2/2. In terms of biological role, catalyzes the conversion of dethiobiotin (DTB) to biotin by the insertion of a sulfur atom into dethiobiotin via a radical-based mechanism. This Salinibacter ruber (strain DSM 13855 / M31) protein is Biotin synthase.